A 480-amino-acid polypeptide reads, in one-letter code: 3-isopropylmalate dehydratase large subunit (480 aa).

Residues Cys-361, Cys-421, and Cys-424 each contribute to the [4Fe-4S] cluster site.

The protein belongs to the aconitase/IPM isomerase family. LeuC type 1 subfamily. As to quaternary structure, heterodimer of LeuC and LeuD. [4Fe-4S] cluster is required as a cofactor.

The enzyme catalyses (2R,3S)-3-isopropylmalate = (2S)-2-isopropylmalate. Its pathway is amino-acid biosynthesis; L-leucine biosynthesis; L-leucine from 3-methyl-2-oxobutanoate: step 2/4. Catalyzes the isomerization between 2-isopropylmalate and 3-isopropylmalate, via the formation of 2-isopropylmaleate. The chain is 3-isopropylmalate dehydratase large subunit from Corynebacterium diphtheriae (strain ATCC 700971 / NCTC 13129 / Biotype gravis).